The chain runs to 95 residues: Protein FAM240C (95 aa).

The disordered stretch occupies residues lysine 68 to alanine 95. Over residues cysteine 76–alanine 95 the composition is skewed to basic and acidic residues.

Belongs to the FAM240 family.

In Homo sapiens (Human), this protein is Protein FAM240C (FAM240C).